The chain runs to 201 residues: Guanylate kinase (201 aa).

Positions 10-195 (GKIIILSGPS…CVEEVKNILK (186 aa)) constitute a Guanylate kinase-like domain. 17 to 24 (GPSGVGKG) is a binding site for ATP.

The protein belongs to the guanylate kinase family.

It is found in the cytoplasm. It catalyses the reaction GMP + ATP = GDP + ADP. In terms of biological role, essential for recycling GMP and indirectly, cGMP. The sequence is that of Guanylate kinase from Mycoplasma mobile (strain ATCC 43663 / 163K / NCTC 11711) (Mesomycoplasma mobile).